Here is a 112-residue protein sequence, read N- to C-terminus: Cytochrome c (112 aa).

Heme c is bound by residues C23, C26, H27, and M89.

Belongs to the cytochrome c family. Binds 1 heme c group covalently per subunit.

It is found in the mitochondrion intermembrane space. Its function is as follows. Electron carrier protein. The oxidized form of the cytochrome c heme group can accept an electron from the heme group of the cytochrome c1 subunit of cytochrome reductase. Cytochrome c then transfers this electron to the cytochrome oxidase complex, the final protein carrier in the mitochondrial electron-transport chain. The sequence is that of Cytochrome c (CYC1) from Chlamydomonas reinhardtii (Chlamydomonas smithii).